Here is a 344-residue protein sequence, read N- to C-terminus: Dihydroorotate dehydrogenase (quinone) (344 aa).

FMN contacts are provided by residues 65–69 (AGLDK) and T89. Substrate is bound at residue K69. Substrate is bound at residue 114–118 (NRMGF). FMN contacts are provided by N145 and N178. Residue N178 participates in substrate binding. S181 functions as the Nucleophile in the catalytic mechanism. N183 provides a ligand contact to substrate. The FMN site is built by K223 and T251. 252-253 (NT) provides a ligand contact to substrate. FMN is bound by residues G274, G303, and 324–325 (YS).

It belongs to the dihydroorotate dehydrogenase family. Type 2 subfamily. Monomer. The cofactor is FMN.

The protein localises to the cell membrane. The catalysed reaction is (S)-dihydroorotate + a quinone = orotate + a quinol. The protein operates within pyrimidine metabolism; UMP biosynthesis via de novo pathway; orotate from (S)-dihydroorotate (quinone route): step 1/1. Catalyzes the conversion of dihydroorotate to orotate with quinone as electron acceptor. The protein is Dihydroorotate dehydrogenase (quinone) of Cupriavidus necator (strain ATCC 17699 / DSM 428 / KCTC 22496 / NCIMB 10442 / H16 / Stanier 337) (Ralstonia eutropha).